Consider the following 605-residue polypeptide: DNA primase (605 aa).

The CHC2-type zinc finger occupies 37–61 (CPFHADKNPSMHINPIKGFYHCFAC). One can recognise a Toprim domain in the interval 248–329 (KEIIVCEGYM…DGKVAILQGG (82 aa)). Glutamate 254, aspartate 298, and aspartate 300 together coordinate Mg(2+).

This sequence belongs to the DnaG primase family. Monomer. Interacts with DnaB. Zn(2+) is required as a cofactor. Mg(2+) serves as cofactor.

It catalyses the reaction ssDNA + n NTP = ssDNA/pppN(pN)n-1 hybrid + (n-1) diphosphate.. In terms of biological role, RNA polymerase that catalyzes the synthesis of short RNA molecules used as primers for DNA polymerase during DNA replication. In Campylobacter jejuni subsp. jejuni serotype O:2 (strain ATCC 700819 / NCTC 11168), this protein is DNA primase.